The sequence spans 249 residues: MNVLSCSINTLIKEGLYEISGVEVGQHFYWQIGGFQVHAQVLITSWVVIAILLGSAVLVVRNPQTIPTDGQNFFEFVLEFIRDVSKTQIGEEYGPWVPFIGTLFLFIFVSNWSGALLPWKIIQLPQGELAAPTNDINTTVALALLTSVAYFYAGLSKKGLGYFSKYIQPTPILLPINILEDFTKPLSLSFRLFGNILADELVVVVLVSLVPLVVPIPVMFLGLFTSGIQALIFATLAAAYIGESMEGHH.

The next 5 membrane-spanning stretches (helical) occupy residues 40 to 60 (QVLI…VLVV), 97 to 117 (VPFI…GALL), 136 to 156 (INTT…AGLS), 201 to 221 (LVVV…VMFL), and 222 to 242 (GLFT…AYIG).

This sequence belongs to the ATPase A chain family. F-type ATPases have 2 components, CF(1) - the catalytic core - and CF(0) - the membrane proton channel. CF(1) has five subunits: alpha(3), beta(3), gamma(1), delta(1), epsilon(1). CF(0) has four main subunits: a, b, b' and c.

The protein resides in the plastid. It localises to the chloroplast thylakoid membrane. Functionally, key component of the proton channel; it plays a direct role in the translocation of protons across the membrane. The polypeptide is ATP synthase subunit a, chloroplastic (Aethionema grandiflorum (Persian stone-cress)).